Here is a 595-residue protein sequence, read N- to C-terminus: Potassium-transporting ATPase potassium-binding subunit (595 aa).

10 consecutive transmembrane segments (helical) span residues 9–29 (ICGYLGVLLALAKPLGSYMAA), 63–83 (TGYASAFLVFNLLGVLAVYAL), 135–155 (GLTVQNFVSAASGMAVLVALI), 177–197 (ILHILLPLSFLLALLLIGQGV), 285–305 (FLEMLAILVISGALCHTFGVM), 312–332 (GWVILAAMTLIFVPLLFVTVL), 412–432 (GLYGMLVFAIVAVFVAGLMIG), 451–471 (AIVILVPPLMVLGGTAVAVML), 516–536 (LMLGLAMWFSRYWLAVPVLAI), and 560–580 (FVGLLVGVVIIVGALTFIPAL).

It belongs to the KdpA family. As to quaternary structure, the system is composed of three essential subunits: KdpA, KdpB and KdpC.

The protein localises to the cell inner membrane. Functionally, part of the high-affinity ATP-driven potassium transport (or Kdp) system, which catalyzes the hydrolysis of ATP coupled with the electrogenic transport of potassium into the cytoplasm. This subunit binds the periplasmic potassium ions and delivers the ions to the membrane domain of KdpB through an intramembrane tunnel. This is Potassium-transporting ATPase potassium-binding subunit from Methylococcus capsulatus (strain ATCC 33009 / NCIMB 11132 / Bath).